Consider the following 132-residue polypeptide: C-X-C motif chemokine 5 (132 aa).

A signal peptide spans Met-1–Ala-40. Cystine bridges form between Cys-53–Cys-79 and Cys-55–Cys-95.

It belongs to the intercrine alpha (chemokine CxC) family. Monomer. Homodimer. In terms of processing, GCP-2(1-78) and GCP-2(9-78) are produced by proteolytic cleavage after secretion from fibroblasts and epithelial cells. GCP-2(9-78) is the most prominent form. A number of additional N-terminal (processed between pos. 41 and 48) and C-terminal (processed between pos. 118 and 132) processed forms have been identified, probably also representing intermediate states.

It is found in the secreted. In terms of biological role, may participate in the recruitment of inflammatory cells by injured or infected tissue. GCP-2(1-78) and, more potent, GCP-2(9-78) attract neutrophils and are involved in neutrophil activation. The protein is C-X-C motif chemokine 5 (Cxcl5) of Mus musculus (Mouse).